The primary structure comprises 374 residues: Putative phosphoserine aminotransferase (374 aa).

Residue Arg48 participates in L-glutamate binding. Pyridoxal 5'-phosphate is bound by residues 82 to 83, Phe106, Thr152, Asp174, and Gln197; that span reads AT. Lys198 is modified (N6-(pyridoxal phosphate)lysine). Pyridoxal 5'-phosphate is bound at residue 249-250; sequence NT.

It belongs to the class-V pyridoxal-phosphate-dependent aminotransferase family. SerC subfamily. As to quaternary structure, homodimer. Pyridoxal 5'-phosphate is required as a cofactor.

The protein resides in the cytoplasm. The enzyme catalyses O-phospho-L-serine + 2-oxoglutarate = 3-phosphooxypyruvate + L-glutamate. The catalysed reaction is 4-(phosphooxy)-L-threonine + 2-oxoglutarate = (R)-3-hydroxy-2-oxo-4-phosphooxybutanoate + L-glutamate. The protein operates within amino-acid biosynthesis; L-serine biosynthesis; L-serine from 3-phospho-D-glycerate: step 2/3. It functions in the pathway cofactor biosynthesis; pyridoxine 5'-phosphate biosynthesis; pyridoxine 5'-phosphate from D-erythrose 4-phosphate: step 3/5. Its function is as follows. Catalyzes the reversible conversion of 3-phosphohydroxypyruvate to phosphoserine and of 3-hydroxy-2-oxo-4-phosphonooxybutanoate to phosphohydroxythreonine. This chain is Putative phosphoserine aminotransferase, found in Mycolicibacterium paratuberculosis (strain ATCC BAA-968 / K-10) (Mycobacterium paratuberculosis).